Reading from the N-terminus, the 253-residue chain is 3-deoxy-manno-octulosonate cytidylyltransferase (253 aa).

It belongs to the KdsB family.

The protein localises to the cytoplasm. The enzyme catalyses 3-deoxy-alpha-D-manno-oct-2-ulosonate + CTP = CMP-3-deoxy-beta-D-manno-octulosonate + diphosphate. It participates in nucleotide-sugar biosynthesis; CMP-3-deoxy-D-manno-octulosonate biosynthesis; CMP-3-deoxy-D-manno-octulosonate from 3-deoxy-D-manno-octulosonate and CTP: step 1/1. The protein operates within bacterial outer membrane biogenesis; lipopolysaccharide biosynthesis. Activates KDO (a required 8-carbon sugar) for incorporation into bacterial lipopolysaccharide in Gram-negative bacteria. The polypeptide is 3-deoxy-manno-octulosonate cytidylyltransferase (Neisseria gonorrhoeae (strain ATCC 700825 / FA 1090)).